Here is a 651-residue protein sequence, read N- to C-terminus: Nucleolin (651 aa).

Over residues 1–11 (MVKLAKGAKTQ) the composition is skewed to low complexity. The interval 1-230 (MVKLAKGAKT…AKKTKTDTAS (230 aa)) is disordered. Residues 26 to 45 (EDSEEEEDMEEDDSSDEEVE) show a composition bias toward acidic residues. The segment covering 54 to 79 (KKTATPAKATPGKAATPGKKGATPAK) has biased composition (low complexity). Acidic residues predominate over residues 89-101 (SEEEEDDSDEEAE). Residues 106–116 (IKNKPVAKKAV) are compositionally biased toward basic residues. Composition is skewed to acidic residues over residues 122–134 (SEED…ESEE), 155–168 (SEEE…DEPM), and 183–204 (AEED…EEEQ). Residue serine 155 is modified to Phosphoserine. The span at 219–228 (PEAKKTKTDT) shows a compositional bias: basic and acidic residues. RRM domains follow at residues 233–309 (LSIF…KAMA), 325–399 (RTLF…FTGE), 415–488 (KVLV…FSQG), and 503–578 (KTLF…FAKP). Residues 574 to 651 (DFAKPKGDSQ…GQGKKMRFDD (78 aa)) are disordered. Over residues 585–644 (GGRGGFGRGGGFRGGRGGRGGGGGRGFGGRGGGRGRGGFGGRGGGGFRGGQGGGFRGGQG) the composition is skewed to gly residues.

It localises to the nucleus. It is found in the nucleolus. Nucleolin is the major nucleolar protein of growing eukaryotic cells. It is found associated with intranucleolar chromatin and pre-ribosomal particles. It induces chromatin decondensation by binding to histone H1. It is thought to play a role in pre-rRNA transcription and ribosome assembly. The protein is Nucleolin (ncl) of Xenopus laevis (African clawed frog).